The chain runs to 139 residues: Peptide methionine sulfoxide reductase MsrB (139 aa).

Residues 17-139 (EEQWRRELSP…NSAALKLEPK (123 aa)) enclose the MsrB domain. 4 residues coordinate Zn(2+): C56, C59, C105, and C108. The active-site Nucleophile is the C128.

It belongs to the MsrB Met sulfoxide reductase family. Zn(2+) is required as a cofactor.

It catalyses the reaction L-methionyl-[protein] + [thioredoxin]-disulfide + H2O = L-methionyl-(R)-S-oxide-[protein] + [thioredoxin]-dithiol. The polypeptide is Peptide methionine sulfoxide reductase MsrB (Bradyrhizobium diazoefficiens (strain JCM 10833 / BCRC 13528 / IAM 13628 / NBRC 14792 / USDA 110)).